The chain runs to 305 residues: Achromobactin-binding periplasmic protein (305 aa).

A signal peptide spans 1–29; it reads MNEYLVSRRRLLRLSLSLLPLGLGRPALA. The Fe/B12 periplasmic-binding domain maps to 37–302; it reads RVITLFQGAT…DIARVTGIAG (266 aa).

The protein belongs to the bacterial solute-binding protein 8 family.

The protein resides in the periplasm. Binds citrate- or chloride-dependent Fe(3+); part of the binding-protein-dependent transport system CbrABCD for uptake of the siderophore achromobactin. This chain is Achromobactin-binding periplasmic protein (cbrA), found in Dickeya dadantii (strain 3937) (Erwinia chrysanthemi (strain 3937)).